A 248-amino-acid polypeptide reads, in one-letter code: 3-deoxy-manno-octulosonate cytidylyltransferase (248 aa).

It belongs to the KdsB family. Requires Mg(2+) as cofactor.

It is found in the cytoplasm. The catalysed reaction is 3-deoxy-alpha-D-manno-oct-2-ulosonate + CTP = CMP-3-deoxy-beta-D-manno-octulosonate + diphosphate. Its pathway is nucleotide-sugar biosynthesis; CMP-3-deoxy-D-manno-octulosonate biosynthesis; CMP-3-deoxy-D-manno-octulosonate from 3-deoxy-D-manno-octulosonate and CTP: step 1/1. It participates in bacterial outer membrane biogenesis; lipopolysaccharide biosynthesis. In terms of biological role, activates KDO (a required 8-carbon sugar) for incorporation into bacterial lipopolysaccharide in Gram-negative bacteria. This Escherichia coli O157:H7 protein is 3-deoxy-manno-octulosonate cytidylyltransferase.